Reading from the N-terminus, the 574-residue chain is Pyruvate kinase PKLR (574 aa).

Phosphoserine is present on residues S2, S19, S26, and S43. R116 is a binding site for substrate. K(+) is bound by residues N118, S120, D156, and T157. 118–121 (NFSH) provides a ligand contact to ATP. ATP contacts are provided by R163 and K250. A Phosphoserine modification is found at S292. Residue K313 coordinates substrate. Residue E315 coordinates Mn(2+). Substrate contacts are provided by G338, D339, and T371. D339 is a Mn(2+) binding site. Residues 475–480 (TTTGRS), W525, R532, and 559–564 (RPGSGY) each bind beta-D-fructose 1,6-bisphosphate.

It belongs to the pyruvate kinase family. As to quaternary structure, homotetramer. The cofactor is Mg(2+). Mn(2+) serves as cofactor. K(+) is required as a cofactor.

The enzyme catalyses pyruvate + ATP = phosphoenolpyruvate + ADP + H(+). The protein operates within carbohydrate degradation; glycolysis; pyruvate from D-glyceraldehyde 3-phosphate: step 5/5. Allosterically activated by fructose 1,6-bisphosphate. Its function is as follows. Pyruvate kinase that catalyzes the conversion of phosphoenolpyruvate to pyruvate with the synthesis of ATP, and which plays a key role in glycolysis. The chain is Pyruvate kinase PKLR (PKLR) from Homo sapiens (Human).